The primary structure comprises 143 residues: Hemoglobin anodic subunit alpha (143 aa).

At serine 2 the chain carries N-acetylserine. Residues 2–143 enclose the Globin domain; the sequence is SLSAKDMAVV…FTLALSERYR (142 aa). Residue histidine 60 participates in O2 binding. Histidine 89 is a heme b binding site.

This sequence belongs to the globin family. In terms of assembly, heterotetramer of two alpha chains and two beta chains. Red blood cells.

Involved in oxygen transport from gills to the various peripheral tissues. The sequence is that of Hemoglobin anodic subunit alpha (hba) from Anguilla anguilla (European freshwater eel).